Here is a 365-residue protein sequence, read N- to C-terminus: tRNA N6-adenosine threonylcarbamoyltransferase (365 aa).

Residues His119 and His123 each coordinate Fe cation. Residues 141–145 (LVSGG), Asp174, Gly187, and Asn289 each bind substrate. Asp317 provides a ligand contact to Fe cation. A disordered region spans residues 342–365 (ARPRWPLDSKSPAMLGSGKKGAKA).

The protein belongs to the KAE1 / TsaD family. Fe(2+) serves as cofactor.

The protein localises to the cytoplasm. It carries out the reaction L-threonylcarbamoyladenylate + adenosine(37) in tRNA = N(6)-L-threonylcarbamoyladenosine(37) in tRNA + AMP + H(+). Its function is as follows. Required for the formation of a threonylcarbamoyl group on adenosine at position 37 (t(6)A37) in tRNAs that read codons beginning with adenine. Is involved in the transfer of the threonylcarbamoyl moiety of threonylcarbamoyl-AMP (TC-AMP) to the N6 group of A37, together with TsaE and TsaB. TsaD likely plays a direct catalytic role in this reaction. This is tRNA N6-adenosine threonylcarbamoyltransferase from Roseobacter denitrificans (strain ATCC 33942 / OCh 114) (Erythrobacter sp. (strain OCh 114)).